The chain runs to 1284 residues: A-type inclusion protein A25 homolog (1284 aa).

The segment at 340 to 383 (KPITNTGIEEPHATGGDKEEQEQQPVKVVQSKPDDGITPYNPFE) is disordered. The span at 348 to 357 (EEPHATGGDK) shows a compositional bias: basic and acidic residues. Tandem repeats lie at residues 611–637 (VRRE…RNQE), 638–665 (DTQE…SGGG), 666–689 (NLTE…ECRG), 690–720 (NATE…NNAD), 721–751 (TERE…SNAD), 752–780 (MERE…GNGT), 781–811 (SSEE…ELYS), 812–842 (AYKS…KTDS), 843–871 (YYRR…TNHA), and 872–912 (KYID…REIE). Positions 611 to 912 (VRRELEEERR…DMDQYKREIE (302 aa)) are 10 X approximate tandem repeats. The interval 1169-1234 (PLTTEDTEPK…PPKPETPQIS (66 aa)) is disordered. A compositionally biased stretch (low complexity) spans 1180–1192 (VEVVPPSSDVTEP). Positions 1211-1221 (SEYQTSVSQVA) are enriched in polar residues.

This sequence belongs to the poxviridae A25 protein family. As to quaternary structure, interacts (via N-terminus) with protein A26.

It localises to the virion. Its function is as follows. Structural protein that forms a matrix surrounding the mature virion (MV) through interaction with protein A26. Presence of protein A25 in the virion structurally prevents direct virus-cell fusion mechanism. This chain is A-type inclusion protein A25 homolog (ATI), found in Apodemus sylvaticus (European woodmouse).